A 401-amino-acid polypeptide reads, in one-letter code: MVKFDSGSESEMTNGDEVHINTKHEVKSRMANGNGVHNVPDHDQFQDRAEMEVLILPDLFSSLMSVPARENPHYASVKADADEWISSVINADAKWASRNKRVDFTYLASIWAPDCSAFALRTSADWNSWAFLFDDQFDEGHLSNDLDGAINEIARTREIMEGTAPRYTADSEHPIRYVFQTLCDRVKQSPEGFYAGKPSSDRFYRRWMWAHELYWEGLVAQVRTNVEGRSFTRGPEEYLAMRRGSLGAYPALVNNEWAYGIDLPEDVADHPLVFEIMVIMSDQILLVNDILSYEKDLRLGVDHNMVRLLKAKGLSTQQAINEVGVMINNCYRRYYRALSELPCFGEEADRALLGYLEVEKNHALGSLLWSYKTGRYFKSKEDGARVRKTRELLIPKKMAAL.

Residues aspartate 134 and glutamate 139 each coordinate Mg(2+). The DDXXD motif motif lies at aspartate 134 to aspartate 138. Arginine 242 is a binding site for substrate. 2 residues coordinate Mg(2+): asparagine 288 and serine 292. Lysine 295 is a binding site for substrate. Aspartate 296 serves as a coordination point for Mg(2+). Arginine 375–tyrosine 376 contributes to the substrate binding site.

This sequence belongs to the terpene synthase family. Requires Mg(2+) as cofactor.

It carries out the reaction (2E,6E)-farnesyl diphosphate = (1R,4R,5S)-(-)-guaia-6,10(14)-diene + diphosphate. It participates in secondary metabolite biosynthesis; terpenoid biosynthesis. Functionally, catalyzes the conversion of (2E,6E)-farnesyl diphosphate (FPP) to yield the bicyclic sesquiterpene guaia-6,10(14)-diene via a 1,10-cyclization, which requires the abstraction of the pyrophosphate from FPP to yield the (E,E)-germacradienyl cation. The only accepted substrate is farnesyl diphosphate (FPP). The polypeptide is (1R,4R,5S)-(-)-guaia-6,10(14)-diene synthase (Fusarium mangiferae (Mango malformation disease fungus)).